Reading from the N-terminus, the 257-residue chain is Indole-3-glycerol phosphate synthase (257 aa).

This sequence belongs to the TrpC family.

It carries out the reaction 1-(2-carboxyphenylamino)-1-deoxy-D-ribulose 5-phosphate + H(+) = (1S,2R)-1-C-(indol-3-yl)glycerol 3-phosphate + CO2 + H2O. It participates in amino-acid biosynthesis; L-tryptophan biosynthesis; L-tryptophan from chorismate: step 4/5. This chain is Indole-3-glycerol phosphate synthase, found in Chlorobium chlorochromatii (strain CaD3).